Here is a 506-residue protein sequence, read N- to C-terminus: UBX domain-containing protein 4 (506 aa).

The segment at 1–199 (MLWFQGAIPA…PAEDLTVRVE (199 aa)) is interaction with UBQLN1. Residues 1–411 (MLWFQGAIPA…VPSSSGDIWT (411 aa)) are Cytoplasmic-facing. Composition is skewed to polar residues over residues 114–136 (SLKGETSVTNDKQSESSVSTPSA) and 177–189 (SLSQEPPGCSNQR). The tract at residues 114–193 (SLKGETSVTN…GCSNQRPAED (80 aa)) is disordered. The UBX domain occupies 313–391 (DRSTIARIQF…ELAPSASVVL (79 aa)). An intramembrane segment occupies 412-432 (LLGTVLYPFLAIWRLISNFLF). Over 433-506 (SNPPPAQTSA…TWNGNSTQQM (74 aa)) the chain is Cytoplasmic. A disordered region spans residues 437–506 (PAQTSARATS…TWNGNSTQQM (70 aa)). The segment covering 444-456 (ATSTEPSNSASSS) has biased composition (low complexity). A compositionally biased stretch (basic and acidic residues) spans 457 to 489 (KSEKREPVRKRVLEKRGEDFKKEGKIYRLRTQD). Position 487 is a phosphothreonine (Thr-487). Residues 496–506 (NTWNGNSTQQM) show a composition bias toward polar residues.

As to quaternary structure, directly interacts with VCP. Interacts with UBQLN1. Forms a complex with VCP and UBQLN1.

It is found in the endoplasmic reticulum membrane. Its subcellular location is the nucleus envelope. Its function is as follows. Involved in endoplasmic reticulum-associated protein degradation (ERAD). Acts as a platform to recruit both UBQLN1 and VCP to the ER during ERAD. The chain is UBX domain-containing protein 4 (Ubxn4) from Rattus norvegicus (Rat).